A 76-amino-acid polypeptide reads, in one-letter code: uncharacterized protein (76 aa).

This is an uncharacterized protein from Magallana gigas (Pacific oyster).